The chain runs to 439 residues: Forkhead box protein J1-B (439 aa).

The segment at residues 124–218 is a DNA-binding region (fork-head); the sequence is KPPYSYATLI…MNGAMKKRRL (95 aa).

Belongs to the FOXJ1 family.

It is found in the nucleus. In terms of biological role, key transcription factor required for motile ciliogenesis. Activates genes essential for motile cilia formation and function. This is Forkhead box protein J1-B (foxj1-b) from Xenopus laevis (African clawed frog).